Here is a 230-residue protein sequence, read N- to C-terminus: 2,3-bisphosphoglycerate-dependent phosphoglycerate mutase (230 aa).

Residues 8 to 15 (RHGESEWN), 21 to 22 (TG), Arg-60, 87 to 90 (ERHY), Lys-98, 114 to 115 (RR), and 183 to 184 (GN) each bind substrate. His-9 acts as the Tele-phosphohistidine intermediate in catalysis. The Proton donor/acceptor role is filled by Glu-87.

Belongs to the phosphoglycerate mutase family. BPG-dependent PGAM subfamily.

The catalysed reaction is (2R)-2-phosphoglycerate = (2R)-3-phosphoglycerate. The protein operates within carbohydrate degradation; glycolysis; pyruvate from D-glyceraldehyde 3-phosphate: step 3/5. Its function is as follows. Catalyzes the interconversion of 2-phosphoglycerate and 3-phosphoglycerate. In Streptococcus gordonii (strain Challis / ATCC 35105 / BCRC 15272 / CH1 / DL1 / V288), this protein is 2,3-bisphosphoglycerate-dependent phosphoglycerate mutase.